We begin with the raw amino-acid sequence, 256 residues long: Type III pantothenate kinase (256 aa).

An ATP-binding site is contributed by 6-13 (DVGNTNIV). Substrate is bound at residue 107-110 (GADR). The active-site Proton acceptor is D109. K(+) is bound at residue D129. T132 lines the ATP pocket. T184 is a substrate binding site.

It belongs to the type III pantothenate kinase family. As to quaternary structure, homodimer. NH4(+) is required as a cofactor. K(+) serves as cofactor.

The protein resides in the cytoplasm. The enzyme catalyses (R)-pantothenate + ATP = (R)-4'-phosphopantothenate + ADP + H(+). Its pathway is cofactor biosynthesis; coenzyme A biosynthesis; CoA from (R)-pantothenate: step 1/5. Its function is as follows. Catalyzes the phosphorylation of pantothenate (Pan), the first step in CoA biosynthesis. This is Type III pantothenate kinase from Pelotomaculum thermopropionicum (strain DSM 13744 / JCM 10971 / SI).